An 81-amino-acid chain; its full sequence is Large ribosomal subunit protein bL28 (81 aa).

This sequence belongs to the bacterial ribosomal protein bL28 family. In terms of assembly, part of the 50S ribosomal subunit.

The polypeptide is Large ribosomal subunit protein bL28 (Deinococcus radiodurans (strain ATCC 13939 / DSM 20539 / JCM 16871 / CCUG 27074 / LMG 4051 / NBRC 15346 / NCIMB 9279 / VKM B-1422 / R1)).